Here is a 776-residue protein sequence, read N- to C-terminus: Protein SEY1 (776 aa).

Over 1–681 (MADRSAIQLI…KRSIITTRTH (681 aa)) the chain is Cytoplasmic. A GB1/RHD3-type G domain is found at 34-263 (GLDYHVISVF…TENYYFKPQY (230 aa)). GTP is bound at residue 44 to 51 (GSQSSGKS). A helical transmembrane segment spans residues 682–702 (IPPWIYVLLAVLGWNEFVAVI). Topologically, residues 703-705 (RNP) are lumenal. Residues 706-726 (LFVTLTLILGATFFVIHKFGL) form a helical membrane-spanning segment. Over 727–776 (WGPVVNVVQSAVGETRTAIKDKLRQFVVEDHEVKESFEMKDFSKNEQKEK) the chain is Cytoplasmic.

The protein belongs to the TRAFAC class dynamin-like GTPase superfamily. GB1/RHD3 GTPase family. RHD3 subfamily. Interacts with RTN1 and YOP1; GTP binding is not required for these interactions.

The protein resides in the endoplasmic reticulum membrane. Its function is as follows. Cooperates with the reticulon proteins RTN1 and RTN2 and the tubule-shaping DP1 family protein YOP1 to generate and maintain the structure of the tubular endoplasmic reticulum network. Has GTPase activity, which is required for its function in ER organization. This chain is Protein SEY1, found in Saccharomyces cerevisiae (strain RM11-1a) (Baker's yeast).